Here is a 1447-residue protein sequence, read N- to C-terminus: Netrin receptor DCC (1447 aa).

Residues 1–25 (MENSLGCVWVPKLAFVLFGASLLSA) form the signal peptide. The Extracellular portion of the chain corresponds to 26–1097 (HLQVTGFQIK…GSVTPQKNSN (1072 aa)). Ig-like C2-type domains follow at residues 36 to 135 (PFTS…AKVT), 139 to 229 (PLRF…AEVR), 234 to 326 (PGLH…AELT), and 331 to 416 (PWFL…AQLI). N-linked (GlcNAc...) asparagine glycans are attached at residues Asn-60 and Asn-94. 3 disulfide bridges follow: Cys-61–Cys-117, Cys-161–Cys-212, and Cys-261–Cys-310. N-linked (GlcNAc...) asparagine glycans are attached at residues Asn-299 and Asn-318. Cysteines 352 and 400 form a disulfide. Fibronectin type-III domains lie at 431 to 524 (APRD…TQPE), 530 to 620 (PVEN…TLSD), 625 to 718 (PPQN…TPEN), 728 to 821 (QPSS…TDPT), 846 to 942 (PPVG…TYEA), and 947 to 1044 (APKD…TLKV). N-linked (GlcNAc...) asparagine glycosylation is present at Asn-478. 2 N-linked (GlcNAc...) asparagine glycosylation sites follow: Asn-628 and Asn-702. A helical transmembrane segment spans residues 1098–1122 (LLVITVVTVGVLTVLVVVIVAVICT). The Cytoplasmic portion of the chain corresponds to 1123–1447 (RRSSAQQRKK…QLNAITGSAF (325 aa)). 2 disordered regions span residues 1126 to 1153 (SAQQRKKRATHSVSKRKGSQKDLRPPDL) and 1166 to 1220 (EKPT…MSTL). Over residues 1129 to 1143 (QRKKRATHSVSKRKG) the composition is skewed to basic residues. The segment covering 1144–1153 (SQKDLRPPDL) has biased composition (basic and acidic residues). Ser-1178 is subject to Phosphoserine; by MAPK1. Residues 1179 to 1220 (PIQSCQDLTPVSHSQSETQMGSKSASHSGQDTEDAGSSMSTL) show a composition bias toward polar residues. Residue Thr-1187 is modified to Phosphothreonine; by MAPK1. Position 1267 is a phosphoserine; by MAPK1 (Ser-1267). 2 disordered regions span residues 1291–1329 (RGFGAGRTQSVSEGPTTQQQPMLPPAQPEHPSSEEAPSR) and 1394–1419 (LLPVSVPTAPEVSEESHKPTEDPASV). Over residues 1297 to 1311 (RTQSVSEGPTTQQQP) the composition is skewed to polar residues.

The protein belongs to the immunoglobulin superfamily. DCC family. Interacts with the cytoplasmic part of UNC5A, UNC5B, UNC5C and probably UNC5D. Interacts with MAPK1. Interacts with NTN1. Interacts with DSCAM. Interacts with PTK2/FAK1. Interacts with MYO10. Interacts with CBLN4; this interaction can be competed by NTN1. Interacts with SIAH1 and SIAH2. In terms of processing, ubiquitinated; mediated by SIAH1 or SIAH2 and leading to its subsequent proteasomal degradation. As to expression, in the embryo, expressed at high levels in the developing brain and neural tube. In the embryo, expressed in developing neurons of the telencephalic cortical plate and in developing brainstem nuclei. In adult, highly expressed in brain with very low levels found in testis, heart and thymus. Isoform C is expressed only in the embryo.

The protein localises to the membrane. Functionally, receptor for netrin required for axon guidance. Mediates axon attraction of neuronal growth cones in the developing nervous system upon ligand binding. Its association with UNC5 proteins may trigger signaling for axon repulsion. It also acts as a dependence receptor required for apoptosis induction when not associated with netrin ligand. Implicated as a tumor suppressor gene. The chain is Netrin receptor DCC (Dcc) from Mus musculus (Mouse).